Consider the following 82-residue polypeptide: Chaplin-E (82 aa).

An N-terminal signal peptide occupies residues 1–27; the sequence is MKNLKKAAAVTMVAGGLIAAGAGMASA. The Chaplin domain occupies 41–81; that stretch reads SPGVASGNLVQAPIHIPVNAVGNSVNVIGVLNPAFGNLGVN.

It belongs to the chaplin family. Short chaplin subfamily.

The protein localises to the cell surface. Its subcellular location is the secreted. It localises to the cell wall. The protein resides in the fimbrium. Functionally, one of 8 partially redundant surface-active proteins required for efficient formation of aerial mycelium; the short chaplins assemble into a hydrophobic, amyloidal fibrillar surface layer that envelopes and protects aerial hyphae and spores, presumably anchored to the long chaplins. Chaplins have an overlapping function with the surface-active SapB peptide; chaplins are essential on minimal medium while on rich medium both chaplins and SapB are required for efficient aerial hyphae formation. Chaplins are also involved in cell attachment to a hydrophobic surface. Forms amyloid fibrils in vitro probably composed of stacked beta-sheets, at low extracellular concentrations individually restores the ability to form aerial hyphae to a chaplin-deficient strain, but does so less well than other short chaplins. A small chaplin extract (ChpD, ChpE, ChpF, ChpG and ChpH) self-assembles into 2 different amyloids; small fibrils at the air-water interface form an amphipathic membrane that resembles spore-surface structures involved in aerial hyphae formation, and hydrophilic fibrils in solution that resemble the fibers that attach cells to a hydrophobic surface. At the air-water interface the hydrophilic surface is in contact with water (probably equivalent to the peptidoglycan layer), while the hydrophobic face is exposed to the air, making the surface of the aerial hyphae hydrophobic. A minimal chaplin strain capable of forming aerial mycelium/hyphae on minimal medium contains ChpC, ChpE and ChpH. The strain also has restored rodlet formation on the hyphae surface. A second strain with ChpA, ChpD and ChpE makes slightly less robust hyphae. This essential chaplin may coordinate the assembly and/or polymerization of the other chaplins. A small chaplin extract applied to a chaplin-deficient strain restores aerial hyphae formation. The small chaplin extract forms an amyloid-like structure similar to that seen on the surface of cells without rodlets (rdlA-rdlB deletions), and is highly surface active, reducing surface tension from 72 to 26 mJ/m(2), which probably allows escape of hyphae from an aqueous environment into air. The protein is Chaplin-E of Streptomyces coelicolor (strain ATCC BAA-471 / A3(2) / M145).